The following is a 274-amino-acid chain: Protein TIC 20-I, chloroplastic (274 aa).

The N-terminal 65 residues, 1-65, are a transit peptide targeting the chloroplast; the sequence is MITGYSTPSA…ELPRVSRGVP (65 aa). 4 helical membrane passes run 130 to 152, 167 to 187, 200 to 220, and 229 to 249; these read LPYLMPLHETWMYAETAYHLHPF, IGRLPSWFLMAYFFVAYLGIV, VVMGMLLEIALQVIGTVSKWM, and FGMHFWTAVAFAYLFTVLESI.

This sequence belongs to the Tic20 family. Part of the Tic complex. Component of the 1-MD complex, composed of TIC20-I, TIC214, TIC100 and TIC56. Interacts with the translocating preproteins. Hydrolysis of ATP is essential for the formation of this complex. The 1-MD complex interacts with TIC21. Expressed in leaves, shoots and roots. High expression in mature photosynthetic tissues. Lower levels in non-photosynthetic tissues and roots.

It is found in the plastid. It localises to the chloroplast inner membrane. Involved in protein precursor import into chloroplasts. May be part of an intermediate translocation complex acting as a protein-conducting channel at the inner envelope. Seems to be specific for photosynthesis-related pre-proteins. Partially redundant with TIC20-IV, but not with TIC20-II or TIC20-V. This Arabidopsis thaliana (Mouse-ear cress) protein is Protein TIC 20-I, chloroplastic.